Consider the following 477-residue polypeptide: Glycogen synthase (477 aa).

ADP-alpha-D-glucose is bound at residue Lys15.

It belongs to the glycosyltransferase 1 family. Bacterial/plant glycogen synthase subfamily.

The catalysed reaction is [(1-&gt;4)-alpha-D-glucosyl](n) + ADP-alpha-D-glucose = [(1-&gt;4)-alpha-D-glucosyl](n+1) + ADP + H(+). Its pathway is glycan biosynthesis; glycogen biosynthesis. Its function is as follows. Synthesizes alpha-1,4-glucan chains using ADP-glucose. The polypeptide is Glycogen synthase (Anaeromyxobacter dehalogenans (strain 2CP-1 / ATCC BAA-258)).